The sequence spans 114 residues: Protein E7 (114 aa).

An E7 terminal domain region spans residues 1 to 43 (MRGNSVDLQEIVLVQQGEVPENAAVHSGEHSDDEGESEEEERE). The tract at residues 17 to 49 (GEVPENAAVHSGEHSDDEGESEEEEREQVQQVP) is disordered. Over residues 31 to 42 (SDDEGESEEEER) the composition is skewed to acidic residues. A zinc finger lies at 62–99 (CPFCQAIIRFVCVASNTGIRNLQALLVNSHLDLACHAC). The Nuclear export signal motif lies at 80 to 88 (IRNLQALLV).

It belongs to the papillomaviridae E7 protein family. In terms of assembly, homodimer. Homooligomer. Interacts with host RB1; this interaction induces dissociation of RB1-E2F1 complex thereby disrupting RB1 activity. Interacts with host EP300; this interaction represses EP300 transcriptional activity. Interacts with protein E2; this interaction inhibits E7 oncogenic activity. Interacts with host TMEM173/STING; this interaction impairs the ability of TMEM173/STING to sense cytosolic DNA and promote the production of type I interferon (IFN-alpha and IFN-beta). In terms of processing, highly phosphorylated.

The protein resides in the host cytoplasm. It localises to the host nucleus. Functionally, plays a role in viral genome replication by driving entry of quiescent cells into the cell cycle. Stimulation of progression from G1 to S phase allows the virus to efficiently use the cellular DNA replicating machinery to achieve viral genome replication. E7 protein has both transforming and trans-activating activities. Induces the disassembly of the E2F1 transcription factor from RB1, with subsequent transcriptional activation of E2F1-regulated S-phase genes. Interferes with host histone deacetylation mediated by HDAC1 and HDAC2, leading to transcription activation. Also plays a role in the inhibition of both antiviral and antiproliferative functions of host interferon alpha. Interaction with host TMEM173/STING impairs the ability of TMEM173/STING to sense cytosolic DNA and promote the production of type I interferon (IFN-alpha and IFN-beta). This chain is Protein E7, found in Human papillomavirus type 41.